The following is a 237-amino-acid chain: Large ribosomal subunit protein uL22m (237 aa).

It belongs to the universal ribosomal protein uL22 family.

Its subcellular location is the mitochondrion. This chain is Large ribosomal subunit protein uL22m (mrpl22), found in Dictyostelium discoideum (Social amoeba).